The primary structure comprises 156 residues: CD-NTase-associated protein 8 (156 aa).

This sequence belongs to the bacterial HORMA family. HORMA3 subfamily. Interacts with Cap7 (also called HORMA2) and CdnC; forms CdnD:Cap7:Cap8 (also called CdnD:HORMA2:HORMA3) complexes with stoichiometries of 1:1:1 and 2:1:1.

Its function is as follows. CBASS (cyclic oligonucleotide-based antiphage signaling system) provides immunity against bacteriophage. The CD-NTase protein synthesizes cyclic nucleotides in response to infection; these serve as specific second messenger signals. The signals activate a diverse range of effectors, leading to bacterial cell death and thus abortive phage infection. A type III-C(AAA) CBASS system. Functionally, a member of the CBASS system in this bacteria. It does not seem to bind a closure peptide, its exact function is unknown. This chain is CD-NTase-associated protein 8, found in Pseudomonas aeruginosa.